Here is a 559-residue protein sequence, read N- to C-terminus: Glucose-6-phosphate isomerase 4 (559 aa).

The active-site Proton donor is glutamate 356. Residues histidine 387 and lysine 513 contribute to the active site.

The protein belongs to the GPI family.

It is found in the cytoplasm. It carries out the reaction alpha-D-glucose 6-phosphate = beta-D-fructose 6-phosphate. The protein operates within carbohydrate biosynthesis; gluconeogenesis. Its pathway is carbohydrate degradation; glycolysis; D-glyceraldehyde 3-phosphate and glycerone phosphate from D-glucose: step 2/4. Functionally, catalyzes the reversible isomerization of glucose-6-phosphate to fructose-6-phosphate. The chain is Glucose-6-phosphate isomerase 4 from Rhodococcus jostii (strain RHA1).